The sequence spans 236 residues: Aspartate/glutamate leucyltransferase (236 aa).

Belongs to the R-transferase family. Bpt subfamily.

It is found in the cytoplasm. It carries out the reaction N-terminal L-glutamyl-[protein] + L-leucyl-tRNA(Leu) = N-terminal L-leucyl-L-glutamyl-[protein] + tRNA(Leu) + H(+). The catalysed reaction is N-terminal L-aspartyl-[protein] + L-leucyl-tRNA(Leu) = N-terminal L-leucyl-L-aspartyl-[protein] + tRNA(Leu) + H(+). Its function is as follows. Functions in the N-end rule pathway of protein degradation where it conjugates Leu from its aminoacyl-tRNA to the N-termini of proteins containing an N-terminal aspartate or glutamate. This Halorhodospira halophila (strain DSM 244 / SL1) (Ectothiorhodospira halophila (strain DSM 244 / SL1)) protein is Aspartate/glutamate leucyltransferase.